The chain runs to 613 residues: Dihydroxy-acid dehydratase (613 aa).

D81 is a binding site for Mg(2+). C122 provides a ligand contact to [2Fe-2S] cluster. D123 and K124 together coordinate Mg(2+). K124 is modified (N6-carboxylysine). C195 is a [2Fe-2S] cluster binding site. Mg(2+) is bound at residue E491. S517 serves as the catalytic Proton acceptor.

It belongs to the IlvD/Edd family. In terms of assembly, homodimer. [2Fe-2S] cluster is required as a cofactor. It depends on Mg(2+) as a cofactor.

It carries out the reaction (2R)-2,3-dihydroxy-3-methylbutanoate = 3-methyl-2-oxobutanoate + H2O. The catalysed reaction is (2R,3R)-2,3-dihydroxy-3-methylpentanoate = (S)-3-methyl-2-oxopentanoate + H2O. Its pathway is amino-acid biosynthesis; L-isoleucine biosynthesis; L-isoleucine from 2-oxobutanoate: step 3/4. It functions in the pathway amino-acid biosynthesis; L-valine biosynthesis; L-valine from pyruvate: step 3/4. In terms of biological role, functions in the biosynthesis of branched-chain amino acids. Catalyzes the dehydration of (2R,3R)-2,3-dihydroxy-3-methylpentanoate (2,3-dihydroxy-3-methylvalerate) into 2-oxo-3-methylpentanoate (2-oxo-3-methylvalerate) and of (2R)-2,3-dihydroxy-3-methylbutanoate (2,3-dihydroxyisovalerate) into 2-oxo-3-methylbutanoate (2-oxoisovalerate), the penultimate precursor to L-isoleucine and L-valine, respectively. This chain is Dihydroxy-acid dehydratase, found in Nitrobacter hamburgensis (strain DSM 10229 / NCIMB 13809 / X14).